We begin with the raw amino-acid sequence, 250 residues long: tRNA (guanine-N(1)-)-methyltransferase (250 aa).

S-adenosyl-L-methionine contacts are provided by residues Gly114 and 134 to 139 (IGDYVL).

It belongs to the RNA methyltransferase TrmD family. In terms of assembly, homodimer.

Its subcellular location is the cytoplasm. The catalysed reaction is guanosine(37) in tRNA + S-adenosyl-L-methionine = N(1)-methylguanosine(37) in tRNA + S-adenosyl-L-homocysteine + H(+). Specifically methylates guanosine-37 in various tRNAs. This Moorella thermoacetica (strain ATCC 39073 / JCM 9320) protein is tRNA (guanine-N(1)-)-methyltransferase.